Consider the following 147-residue polypeptide: Globin, major polymeric component P1 (147 aa).

In terms of domain architecture, Globin spans 2–146 (HLTADQVAAL…ISDACIAGLQ (145 aa)). A heme b-binding site is contributed by H96.

It belongs to the globin family. As to quaternary structure, polymer.

The sequence is that of Globin, major polymeric component P1 from Glycera dibranchiata (Bloodworm).